The sequence spans 210 residues: Acyl-homoserine-lactone synthase (210 aa).

This sequence belongs to the autoinducer synthase family.

It carries out the reaction a fatty acyl-[ACP] + S-adenosyl-L-methionine = an N-acyl-L-homoserine lactone + S-methyl-5'-thioadenosine + holo-[ACP] + H(+). Functionally, required for the synthesis of OHHL (N-(3-oxohexanoyl)-L-homoserine lactone), an autoinducer molecule which binds to EsaR. OHHL is necessary for biosynthesis of EPS virulence factor (extracellular heteropolysaccharide) which plays a role in the development of Stewart's wilt on sweet corn. The polypeptide is Acyl-homoserine-lactone synthase (esaI) (Pantoea stewartii subsp. stewartii (Erwinia stewartii)).